Here is a 206-residue protein sequence, read N- to C-terminus: N-(5'-phosphoribosyl)anthranilate isomerase (206 aa).

The protein belongs to the TrpF family.

The enzyme catalyses N-(5-phospho-beta-D-ribosyl)anthranilate = 1-(2-carboxyphenylamino)-1-deoxy-D-ribulose 5-phosphate. The protein operates within amino-acid biosynthesis; L-tryptophan biosynthesis; L-tryptophan from chorismate: step 3/5. In Pseudomonas putida (strain ATCC 700007 / DSM 6899 / JCM 31910 / BCRC 17059 / LMG 24140 / F1), this protein is N-(5'-phosphoribosyl)anthranilate isomerase.